A 300-amino-acid chain; its full sequence is 1D-myo-inositol 2-acetamido-2-deoxy-alpha-D-glucopyranoside deacetylase (300 aa).

His13, Asp16, and His147 together coordinate Zn(2+).

It belongs to the MshB deacetylase family. Zn(2+) is required as a cofactor.

It catalyses the reaction 1D-myo-inositol 2-acetamido-2-deoxy-alpha-D-glucopyranoside + H2O = 1D-myo-inositol 2-amino-2-deoxy-alpha-D-glucopyranoside + acetate. Its function is as follows. Catalyzes the deacetylation of 1D-myo-inositol 2-acetamido-2-deoxy-alpha-D-glucopyranoside (GlcNAc-Ins) in the mycothiol biosynthesis pathway. This chain is 1D-myo-inositol 2-acetamido-2-deoxy-alpha-D-glucopyranoside deacetylase, found in Mycolicibacterium paratuberculosis (strain ATCC BAA-968 / K-10) (Mycobacterium paratuberculosis).